Consider the following 438-residue polypeptide: Xylose isomerase (438 aa).

The Mg(2+) site is built by aspartate 306 and aspartate 308.

This sequence belongs to the xylose isomerase family. Homotetramer. Requires Mg(2+) as cofactor.

It is found in the cytoplasm. The enzyme catalyses alpha-D-xylose = alpha-D-xylulofuranose. This is Xylose isomerase from Pseudomonas fluorescens (strain SBW25).